Reading from the N-terminus, the 71-residue chain is Small ribosomal subunit protein bS21 (71 aa).

Basic residues predominate over residues 48–59; the sequence is KAAAAVKRHAKK. The interval 48–71 is disordered; that stretch reads KAAAAVKRHAKKVQRENRKFQRLY. Over residues 60-71 the composition is skewed to basic and acidic residues; the sequence is VQRENRKFQRLY.

The protein belongs to the bacterial ribosomal protein bS21 family.

The protein is Small ribosomal subunit protein bS21 of Saccharophagus degradans (strain 2-40 / ATCC 43961 / DSM 17024).